A 431-amino-acid polypeptide reads, in one-letter code: MFHRHLCKLCSKTPSAATLASPLGKLQEERGEGVAKDPKKDKQHRQIFLQKFRERLDSDTTGKNTLAGFIDLPEGISPTMAAVGPLKRGEEPLPPWLKMKVAKGVSRLPRFNRIRNSMREKRLATVCEEAKCPNIGECWGGDEEEGTATATIMVMGSHCTRGCRFCSVLTSRTPPPLDPDEPQKVANAVAEMGVDYIVMTMVDRDDLTDGGAAHVVRCVNTIKEKNPLLLLEALVGDFHGDLKLVETVALSPLSVYAHNIECVERITPNVRDRRASYRQSLKVLEHVNSFTKGAMLTKSSIMLGLGEKEEEVRQTLRDLRTAGVSAVTLGQYLQPARTRLKVSRYAHPKEFQMWEEEAMAMGFLYCASGPLVRSSYRAGEYYIKSLVKQRGAAATKSNTTTTTTTTTTTTTTNTASLAAATVTDSATLQGE.

Residues 21–43 (SPLGKLQEERGEGVAKDPKKDKQ) form a disordered region. A compositionally biased stretch (basic and acidic residues) spans 26–40 (LQEERGEGVAKDPKK). 7 residues coordinate [4Fe-4S] cluster: C127, C132, C138, C159, C163, C166, and S375. Residues 142–364 (DEEEGTATAT…EEEAMAMGFL (223 aa)) form the Radical SAM core domain.

It belongs to the radical SAM superfamily. Lipoyl synthase family. [4Fe-4S] cluster is required as a cofactor.

It localises to the mitochondrion. The enzyme catalyses [[Fe-S] cluster scaffold protein carrying a second [4Fe-4S](2+) cluster] + N(6)-octanoyl-L-lysyl-[protein] + 2 oxidized [2Fe-2S]-[ferredoxin] + 2 S-adenosyl-L-methionine + 4 H(+) = [[Fe-S] cluster scaffold protein] + N(6)-[(R)-dihydrolipoyl]-L-lysyl-[protein] + 4 Fe(3+) + 2 hydrogen sulfide + 2 5'-deoxyadenosine + 2 L-methionine + 2 reduced [2Fe-2S]-[ferredoxin]. It functions in the pathway protein modification; protein lipoylation via endogenous pathway; protein N(6)-(lipoyl)lysine from octanoyl-[acyl-carrier-protein]: step 2/2. Catalyzes the radical-mediated insertion of two sulfur atoms into the C-6 and C-8 positions of the octanoyl moiety bound to the lipoyl domains of lipoate-dependent enzymes, thereby converting the octanoylated domains into lipoylated derivatives. In Trypanosoma cruzi (strain CL Brener), this protein is Lipoyl synthase 2, mitochondrial.